A 931-amino-acid chain; its full sequence is Protein translocase subunit SecA (931 aa).

ATP-binding positions include Gln-87, 105–109, and Asp-523; that span reads GEGKT. 4 residues coordinate Zn(2+): Cys-915, Cys-917, Cys-926, and His-927.

The protein belongs to the SecA family. Monomer and homodimer. Part of the essential Sec protein translocation apparatus which comprises SecA, SecYEG and auxiliary proteins SecDF-YajC and YidC. It depends on Zn(2+) as a cofactor.

Its subcellular location is the cell inner membrane. It is found in the cytoplasm. The catalysed reaction is ATP + H2O + cellular proteinSide 1 = ADP + phosphate + cellular proteinSide 2.. Its function is as follows. Part of the Sec protein translocase complex. Interacts with the SecYEG preprotein conducting channel. Has a central role in coupling the hydrolysis of ATP to the transfer of proteins into and across the cell membrane, serving both as a receptor for the preprotein-SecB complex and as an ATP-driven molecular motor driving the stepwise translocation of polypeptide chains across the membrane. This Xanthobacter autotrophicus (strain ATCC BAA-1158 / Py2) protein is Protein translocase subunit SecA.